Consider the following 467-residue polypeptide: Ankyrin repeat and SOCS box protein 10 (467 aa).

7 ANK repeats span residues 115-144, 147-176, 180-209, 214-243, 247-289, 293-322, and 326-361; these read ELTTPLHVAASRGHTEVLRLLLRRRARPDS, GGRTALHEACAAGHTACVHVLLVAGADPNI, DGKRPLHLCRGPGTLECAELLLRFGARVDG, EEETPLHVAARLGHVELADLLLRRGACPDA, EGWT…DADA, DKQRPLHLACRRGHAAVVELLLSCGVSANT, and GGHTPLHCALQGPAAALAQSPEHVVRALLNHGAVRV. One can recognise an SOCS box domain in the interval 412–464; sequence YSSLFALVRQPRSLQHLSRCALRSHLEGSLPQALPRLPLPPRLLRYLQLDFEG.

This sequence belongs to the ankyrin SOCS box (ASB) family. As to expression, expressed in the eye. The highest expression is observed in the iris, with moderate levels in the trabecular meshwork (TM), the lamina, and the optic nerve; slightly lower levels in the ciliary body, retina, and choroid; and very low levels in the lens.

It localises to the cytoplasm. Its subcellular location is the nucleus. It functions in the pathway protein modification; protein ubiquitination. Its function is as follows. May be a substrate-recognition component of a SCF-like ECS (Elongin-Cullin-SOCS-box protein) E3 ubiquitin-protein ligase complex which mediates the ubiquitination and subsequent proteasomal degradation of target proteins. The polypeptide is Ankyrin repeat and SOCS box protein 10 (ASB10) (Homo sapiens (Human)).